The chain runs to 943 residues: Isoleucine--tRNA ligase (943 aa).

The 'HIGH' region motif lies at 58-68; it reads PYANGSIHIGH. E567 is a binding site for L-isoleucyl-5'-AMP. Residues 608–612 carry the 'KMSKS' region motif; the sequence is KMSKS. K611 serves as a coordination point for ATP. Zn(2+) is bound by residues C906, C909, C926, and C929.

Belongs to the class-I aminoacyl-tRNA synthetase family. IleS type 1 subfamily. As to quaternary structure, monomer. Requires Zn(2+) as cofactor.

It localises to the cytoplasm. The catalysed reaction is tRNA(Ile) + L-isoleucine + ATP = L-isoleucyl-tRNA(Ile) + AMP + diphosphate. Catalyzes the attachment of isoleucine to tRNA(Ile). As IleRS can inadvertently accommodate and process structurally similar amino acids such as valine, to avoid such errors it has two additional distinct tRNA(Ile)-dependent editing activities. One activity is designated as 'pretransfer' editing and involves the hydrolysis of activated Val-AMP. The other activity is designated 'posttransfer' editing and involves deacylation of mischarged Val-tRNA(Ile). The chain is Isoleucine--tRNA ligase from Pseudomonas fluorescens (strain ATCC BAA-477 / NRRL B-23932 / Pf-5).